Consider the following 1030-residue polypeptide: F-box/WD repeat-containing protein 10 (1030 aa).

Positions arginine 280–phenylalanine 329 constitute an F-box domain. WD repeat units follow at residues glycine 466–isoleucine 505, glycine 508–lysine 547, lysine 549–threonine 584, glycine 587–leucine 624, and alanine 626–lysine 667. Residues lysine 709–valine 773 form a disordered region. Over residues lysine 716–arginine 733 the composition is skewed to basic and acidic residues. Polar residues predominate over residues serine 734–glutamine 749. A coiled-coil region spans residues phenylalanine 963–aspartate 992.

In terms of biological role, probable substrate-recognition component of a SCF (SKP1-CUL1-F-box protein)-type E3 ubiquitin ligase complex which mediates the ubiquitination and subsequent proteasomal degradation of target proteins. Overexpression is leading to degradation of CBX5 and CBX1. This chain is F-box/WD repeat-containing protein 10 (Fbxw10), found in Mus musculus (Mouse).